The primary structure comprises 282 residues: 4-diphosphocytidyl-2-C-methyl-D-erythritol kinase (282 aa).

The active site involves Lys9. An ATP-binding site is contributed by 98–108; it reads PMGGGLGGGSS. Residue Asp140 is part of the active site.

Belongs to the GHMP kinase family. IspE subfamily. As to quaternary structure, homodimer.

The catalysed reaction is 4-CDP-2-C-methyl-D-erythritol + ATP = 4-CDP-2-C-methyl-D-erythritol 2-phosphate + ADP + H(+). The protein operates within isoprenoid biosynthesis; isopentenyl diphosphate biosynthesis via DXP pathway; isopentenyl diphosphate from 1-deoxy-D-xylulose 5-phosphate: step 3/6. In terms of biological role, catalyzes the phosphorylation of the position 2 hydroxy group of 4-diphosphocytidyl-2C-methyl-D-erythritol. This chain is 4-diphosphocytidyl-2-C-methyl-D-erythritol kinase, found in Klebsiella pneumoniae (strain 342).